A 201-amino-acid chain; its full sequence is Adapter protein MecA 1 (201 aa).

The protein belongs to the MecA family. As to quaternary structure, homodimer.

Functionally, enables the recognition and targeting of unfolded and aggregated proteins to the ClpC protease or to other proteins involved in proteolysis. Acts negatively in the development of competence by binding ComK and recruiting it to the ClpCP protease. When overexpressed, inhibits sporulation. Also involved in Spx degradation by ClpC. The chain is Adapter protein MecA 1 (mecA1) from Halalkalibacterium halodurans (strain ATCC BAA-125 / DSM 18197 / FERM 7344 / JCM 9153 / C-125) (Bacillus halodurans).